Reading from the N-terminus, the 254-residue chain is Segregation and condensation protein A (254 aa).

This sequence belongs to the ScpA family. As to quaternary structure, component of a cohesin-like complex composed of ScpA, ScpB and the Smc homodimer, in which ScpA and ScpB bind to the head domain of Smc. The presence of the three proteins is required for the association of the complex with DNA.

It localises to the cytoplasm. Functionally, participates in chromosomal partition during cell division. May act via the formation of a condensin-like complex containing Smc and ScpB that pull DNA away from mid-cell into both cell halves. The protein is Segregation and condensation protein A of Clostridium tetani (strain Massachusetts / E88).